Reading from the N-terminus, the 452-residue chain is Rhodopsin (452 aa).

The Extracellular portion of the chain corresponds to 1–33; sequence MGRDIPDNETWWYNPYMDIHPHWKQFDQVPAAV. Asparagine 8 carries N-linked (GlcNAc...) asparagine glycosylation. Residues 34–58 traverse the membrane as a helical segment; it reads YYSLGIFIAICGIIGCVGNGVVIYL. At 59–70 the chain is on the cytoplasmic side; sequence FTKTKSLQTPAN. The chain crosses the membrane as a helical span at residues 71-97; the sequence is MFIINLAFSDFTFSLVNGFPLMTISCF. Topologically, residues 98–109 are extracellular; sequence MKYWVFGNAACK. An intrachain disulfide couples cysteine 108 to cysteine 186. A helical membrane pass occupies residues 110–131; that stretch reads VYGLIGGIFGLMSIMTMTMISI. The 'Ionic lock' involved in activated form stabilization signature appears at 132–134; it reads DRY. The Cytoplasmic segment spans residues 132–151; it reads DRYNVIGRPMSASKKMSHRK. The chain crosses the membrane as a helical span at residues 152–172; that stretch reads AFIMIIFVWIWSTIWAIGPIF. Residues 173–199 are Extracellular-facing; the sequence is GWGAYTLEGVLCNCSFDYITRDTTTRS. The chain crosses the membrane as a helical span at residues 200–224; the sequence is NILCMYIFAFMCPIVVIFFCYFNIV. The Cytoplasmic portion of the chain corresponds to 225 to 261; the sequence is MSVSNHEKEMAAMAKRLNAKELRKAQAGANAEMKLAK. A helical transmembrane segment spans residues 262 to 283; the sequence is ISIVIVTQFLLSWSPYAVVALL. Residues 284–293 are Extracellular-facing; sequence AQFGPIEWVT. The helical transmembrane segment at 294 to 315 threads the bilayer; that stretch reads PYAAQLPVMFAKASAIHNPMIY. N6-(retinylidene)lysine is present on lysine 305. The Cytoplasmic segment spans residues 316–452; it reads SVSHPKFRER…QGVDNQAYQA (137 aa). 2 S-palmitoyl cysteine lipidation sites follow: cysteine 336 and cysteine 337. 2 disordered regions span residues 346 to 365 and 376 to 452; these read DDKDAEAEIPAGEQSGGETA and MMQK…AYQA. The segment covering 376–388 has biased composition (low complexity); sequence MMQKMQAQQQQQP. Pro residues predominate over residues 389–440; the sequence is AYPPQGYPPQGYPPPPPQGYPPQGYPPQGYPPQGYPPPPQGPPPQGPPPQAA.

This sequence belongs to the G-protein coupled receptor 1 family. Opsin subfamily. In terms of processing, contains one covalently linked retinal chromophore. Upon light absorption, the covalently bound 11-cis-retinal is converted to all-trans-retinal. After hydrolysis of the Schiff base and release of the covalently bound all-trans-retinal, active rhodopsin is regenerated by binding of a fresh molecule of 11-cis-retinal.

Its subcellular location is the cell projection. It localises to the rhabdomere membrane. Photoreceptor required for image-forming vision at low light intensity. Light-induced isomerization of 11-cis to all-trans retinal triggers a conformational change that activates signaling via G-proteins. Signaling mediates the activation of phospholipase C. Subsequent receptor phosphorylation mediates displacement of the bound G-protein alpha subunit by arrestin and terminates signaling. The protein is Rhodopsin (RHO) of Loligo forbesii (Veined squid).